The following is a 75-amino-acid chain: UPF0270 protein PSPTO_1630 (75 aa).

The protein belongs to the UPF0270 family.

This is UPF0270 protein PSPTO_1630 from Pseudomonas syringae pv. tomato (strain ATCC BAA-871 / DC3000).